Reading from the N-terminus, the 333-residue chain is Probable 4-hydroxyproline 2-epimerase (333 aa).

The active-site Proton acceptor is Cys-90. Residues 91–92 (GH), His-223, and Asp-249 each bind substrate. Catalysis depends on Cys-253, which acts as the Proton donor. 254–255 (GT) provides a ligand contact to substrate.

Belongs to the proline racemase family.

It carries out the reaction trans-4-hydroxy-L-proline = cis-4-hydroxy-D-proline. In terms of biological role, likely catalyzes the epimerization of trans-4-hydroxy-L-proline (t4LHyp) to cis-4-hydroxy-D-proline (c4DHyp). May be involved in the degradation pathway that converts t4LHyp to alpha-ketoglutarate, which would allow R.meliloti to grow on t4LHyp as a sole carbon source. This chain is Probable 4-hydroxyproline 2-epimerase, found in Rhizobium meliloti (strain 1021) (Ensifer meliloti).